The following is a 1071-amino-acid chain: Carbamoyl phosphate synthase large chain (1071 aa).

Residues 1–403 are carboxyphosphate synthetic domain; sequence MPKRTDLKSI…SFQKALRGLE (403 aa). Residues Arg-129, Arg-169, Gly-175, Gly-176, Gln-208, Val-210, Glu-215, Gly-241, Val-242, His-243, Gln-285, and Glu-299 each coordinate ATP. Positions 133-328 constitute an ATP-grasp 1 domain; the sequence is KEAMEKIGLS…IAKVAAKLAV (196 aa). Mg(2+)-binding residues include Gln-285, Glu-299, and Asn-301. Mn(2+) is bound by residues Gln-285, Glu-299, and Asn-301. Residues 404-548 form an oligomerization domain region; the sequence is TGLCGFNPRS…YSTYEEECEA (145 aa). Positions 549-930 are carbamoyl phosphate synthetic domain; that stretch reads RPSDRKKVMI…AYYKAQLGAG (382 aa). In terms of domain architecture, ATP-grasp 2 spans 673-864; it reads QKVLNDLGLR…LAKVGARCMA (192 aa). ATP-binding residues include Arg-709, Phe-748, Leu-750, Glu-755, Gly-780, Ile-781, His-782, Ser-783, Gln-823, and Glu-835. Positions 823, 835, and 837 each coordinate Mg(2+). 3 residues coordinate Mn(2+): Gln-823, Glu-835, and Asn-837. The 141-residue stretch at 931–1071 folds into the MGS-like domain; sequence ERLNPTGKIF…ELHGRLKNRS (141 aa). The tract at residues 931-1071 is allosteric domain; the sequence is ERLNPTGKIF…ELHGRLKNRS (141 aa).

Belongs to the CarB family. As to quaternary structure, composed of two chains; the small (or glutamine) chain promotes the hydrolysis of glutamine to ammonia, which is used by the large (or ammonia) chain to synthesize carbamoyl phosphate. Tetramer of heterodimers (alpha,beta)4. Mg(2+) serves as cofactor. Requires Mn(2+) as cofactor.

It carries out the reaction hydrogencarbonate + L-glutamine + 2 ATP + H2O = carbamoyl phosphate + L-glutamate + 2 ADP + phosphate + 2 H(+). The catalysed reaction is hydrogencarbonate + NH4(+) + 2 ATP = carbamoyl phosphate + 2 ADP + phosphate + 2 H(+). The protein operates within amino-acid biosynthesis; L-arginine biosynthesis; carbamoyl phosphate from bicarbonate: step 1/1. Its pathway is pyrimidine metabolism; UMP biosynthesis via de novo pathway; (S)-dihydroorotate from bicarbonate: step 1/3. Its function is as follows. Large subunit of the glutamine-dependent carbamoyl phosphate synthetase (CPSase). CPSase catalyzes the formation of carbamoyl phosphate from the ammonia moiety of glutamine, carbonate, and phosphate donated by ATP, constituting the first step of 2 biosynthetic pathways, one leading to arginine and/or urea and the other to pyrimidine nucleotides. The large subunit (synthetase) binds the substrates ammonia (free or transferred from glutamine from the small subunit), hydrogencarbonate and ATP and carries out an ATP-coupled ligase reaction, activating hydrogencarbonate by forming carboxy phosphate which reacts with ammonia to form carbamoyl phosphate. This chain is Carbamoyl phosphate synthase large chain, found in Neisseria meningitidis serogroup A / serotype 4A (strain DSM 15465 / Z2491).